The primary structure comprises 158 residues: Small ribosomal subunit protein uS7 (158 aa).

It belongs to the universal ribosomal protein uS7 family. Part of the 30S ribosomal subunit. Contacts proteins S9 and S11.

One of the primary rRNA binding proteins, it binds directly to 16S rRNA where it nucleates assembly of the head domain of the 30S subunit. Is located at the subunit interface close to the decoding center, probably blocks exit of the E-site tRNA. This Christiangramia forsetii (strain DSM 17595 / CGMCC 1.15422 / KT0803) (Gramella forsetii) protein is Small ribosomal subunit protein uS7.